Here is a 1141-residue protein sequence, read N- to C-terminus: Probable ubiquitin carboxyl-terminal hydrolase 2 (1141 aa).

Thr112 is subject to Phosphothreonine. Ser113 is subject to Phosphoserine. Position 115 is a phosphothreonine (Thr115). The region spanning 614–1124 (IGLENTGNLC…NPYMLTYIRK (511 aa)) is the USP domain. Residue Cys623 is the Nucleophile of the active site. Position 721 is a phosphothreonine (Thr721). Ser722 is modified (phosphoserine). Positions 748 to 770 (EEQAQGLEQEQGQDEAKSPAEQS) are disordered. The active-site Proton acceptor is His1076.

The protein belongs to the peptidase C19 family.

It carries out the reaction Thiol-dependent hydrolysis of ester, thioester, amide, peptide and isopeptide bonds formed by the C-terminal Gly of ubiquitin (a 76-residue protein attached to proteins as an intracellular targeting signal).. This Schizosaccharomyces pombe (strain 972 / ATCC 24843) (Fission yeast) protein is Probable ubiquitin carboxyl-terminal hydrolase 2 (ubp2).